Here is a 496-residue protein sequence, read N- to C-terminus: MFAKATRNFLREVDADGDLIAVSNLNDSDKLQLLSLVTKKKRFWCWQRPKYQFLSLTLGDVLIEDQFPSPVVVESDFVKYEGKFANHVSGTLETALGKVKLNLGGSSRVESQSSFGTLRKQEVDLQQLIRDSAERTINLRNPVLQQVLEGRNEVLCVLTQKITTMQKCVISEHMQVEEKCGGIVGIQTKTVQVSATEDGNVTKDSNVVLEIPAATTIAYGVIELYVKLDGQFEFCLLRGKQGGFENKKRIDSVYLDPLVFREFAFIDMPDAAHGISSQDGPLSVLKQATLLLERNFHPFAELPEPQQTALSDIFQAVLFDDELLMVLEPVCDDLVSGLSPTVAVLGELKPRQQQDLVAFLQLVGCSLQGGCPGPEDAGSKQLFMTAYFLVSALAEMPDSAAALLGTCCKLQIIPTLCHLLRALSDDGVSDLEDPTLTPLKDTERFGIVQRLFASADISLERLKSSVKAVILKDSKVFPLLLCITLNGLCALGREHS.

The segment at 1–56 is membrane targeting domain; the sequence is MFAKATRNFLREVDADGDLIAVSNLNDSDKLQLLSLVTKKKRFWCWQRPKYQFLSL. Residue cysteine 45 is modified to S-(2-succinyl)cysteine. Lysine 120 participates in a covalent cross-link: Glycyl lysine isopeptide (Lys-Gly) (interchain with G-Cter in ubiquitin). 3 positions are modified to S-(2-succinyl)cysteine: cysteine 156, cysteine 168, and cysteine 180. Lysine 189 participates in a covalent cross-link: Glycyl lysine isopeptide (Lys-Gly) (interchain with G-Cter in ubiquitin). S-(2-succinyl)cysteine occurs at positions 235, 371, 408, 417, and 489.

Belongs to the gasdermin family. In terms of assembly, homooligomer; homooligomeric ring-shaped pore complex containing 27-28 subunits when inserted in the membrane. In terms of processing, cleavage at Asp-270 by CASP3 (mature and uncleaved precursor forms) or granzyme B (GZMB) relieves autoinhibition and is sufficient to initiate pyroptosis. Succination by the Krebs cycle intermediate fumarate, which leads to S-(2-succinyl)cysteine residues, inhibits processing by caspases, and ability to initiate pyroptosis. Succination modification is catalyzed by a non-enzymatic reaction caused by an accumulation of fumarate. Post-translationally, ubiquitinated at Lys-120 and Lys-189 via 'Lys-48'-linked polyubiquitin chains, leading to proteasomal degradation. Deubiquitinated by USP48, leading to increased stability. In terms of processing, palmitoylated. As to expression, expressed in cochlea. Low level of expression in heart, brain, placenta, lung, liver, skeletal muscle, kidney and pancreas, with highest expression in placenta.

The protein localises to the cell membrane. It is found in the cytoplasm. The protein resides in the cytosol. With respect to regulation, the full-length protein before cleavage is inactive: intramolecular interactions between N- and C-terminal domains mediate autoinhibition in the absence of activation signal. The intrinsic pyroptosis-inducing activity is carried by the released N-terminal moiety (Gasdermin-E, N-terminal) following cleavage by CASP3 or granzyme B (GZMB). Activated by NLRP1 in the absence of GSDMD expression: NLRP1 cleaves and activates CASP8, promoting downstream activation of CASP3 and subsequent activation of GSDME. Its activity is regulated as follows. (Microbial infection) Activated upon human coronavirus SARS-CoV-2 infection, leading to lung epithelial cell death. Activation takes place in response to (1) activation of NLRP1 and (2) inactivation of GSDMD following NLRP1 and GSDMD cleavage by the SARS-CoV-2 3C-like proteinase nsp5. Its function is as follows. Precursor of a pore-forming protein that converts non-inflammatory apoptosis to pyroptosis. This form constitutes the precursor of the pore-forming protein: upon cleavage, the released N-terminal moiety (Gasdermin-E, N-terminal) binds to membranes and forms pores, triggering pyroptosis. In terms of biological role, pore-forming protein produced by cleavage by CASP3 or granzyme B (GZMB), which converts non-inflammatory apoptosis to pyroptosis or promotes granzyme-mediated pyroptosis, respectively. After cleavage, moves to the plasma membrane, homooligomerizes within the membrane and forms pores of 10-15 nanometers (nm) of inner diameter, allowing the release of mature interleukins (IL1B and IL16) and triggering pyroptosis. Binds to inner leaflet lipids, bisphosphorylated phosphatidylinositols, such as phosphatidylinositol (4,5)-bisphosphate. Cleavage by CASP3 switches CASP3-mediated apoptosis induced by TNF or danger signals, such as chemotherapy drugs, to pyroptosis. Mediates secondary necrosis downstream of the mitochondrial apoptotic pathway and CASP3 activation as well as in response to viral agents. Exhibits bactericidal activity. Cleavage by GZMB promotes tumor suppressor activity by triggering robust anti-tumor immunity. Suppresses tumors by mediating granzyme-mediated pyroptosis in target cells of natural killer (NK) cells: cleavage by granzyme B (GZMB), delivered to target cells from NK-cells, triggers pyroptosis of tumor cells and tumor suppression. May play a role in the p53/TP53-regulated cellular response to DNA damage. Functionally, (Microbial infection) Pore-forming protein, which promotes maternal placental pyroptosis in response to Zika virus infection, contributing to adverse fetal outcomes. In Homo sapiens (Human), this protein is Gasdermin-E.